We begin with the raw amino-acid sequence, 173 residues long: uncharacterized protein (173 aa).

Residues 1–21 (MFIVFYLILIIFIFIYFHVYI) form a helical membrane-spanning segment.

This sequence to T.pallidum TP0711.

It is found in the membrane. This is an uncharacterized protein from Borreliella burgdorferi (strain ATCC 35210 / DSM 4680 / CIP 102532 / B31) (Borrelia burgdorferi).